The following is a 565-amino-acid chain: NAD-dependent malic enzyme (565 aa).

Tyr-104 (proton donor) is an active-site residue. NAD(+) is bound at residue Arg-157. Residue Lys-175 is the Proton acceptor of the active site. Residues Glu-246, Asp-247, and Asp-270 each contribute to the a divalent metal cation site. NAD(+) contacts are provided by Asp-270 and Asn-418.

The protein belongs to the malic enzymes family. Homotetramer. Mg(2+) serves as cofactor. The cofactor is Mn(2+).

The enzyme catalyses (S)-malate + NAD(+) = pyruvate + CO2 + NADH. The catalysed reaction is oxaloacetate + H(+) = pyruvate + CO2. The chain is NAD-dependent malic enzyme from Escherichia coli (strain K12 / MC4100 / BW2952).